We begin with the raw amino-acid sequence, 476 residues long: Bifunctional protein HldE (476 aa).

Positions 1-319 are ribokinase; sequence MKVSLPAFEK…RALSVNHGES (319 aa). Position 195-198 (195-198) interacts with ATP; the sequence is NMGE. D264 is an active-site residue. The cytidylyltransferase stretch occupies residues 345 to 476; it reads MTNGCFDILH…SIIENIMANQ (132 aa).

This sequence in the N-terminal section; belongs to the carbohydrate kinase PfkB family. It in the C-terminal section; belongs to the cytidylyltransferase family. Homodimer.

It catalyses the reaction D-glycero-beta-D-manno-heptose 7-phosphate + ATP = D-glycero-beta-D-manno-heptose 1,7-bisphosphate + ADP + H(+). The catalysed reaction is D-glycero-beta-D-manno-heptose 1-phosphate + ATP + H(+) = ADP-D-glycero-beta-D-manno-heptose + diphosphate. The protein operates within nucleotide-sugar biosynthesis; ADP-L-glycero-beta-D-manno-heptose biosynthesis; ADP-L-glycero-beta-D-manno-heptose from D-glycero-beta-D-manno-heptose 7-phosphate: step 1/4. Its pathway is nucleotide-sugar biosynthesis; ADP-L-glycero-beta-D-manno-heptose biosynthesis; ADP-L-glycero-beta-D-manno-heptose from D-glycero-beta-D-manno-heptose 7-phosphate: step 3/4. Catalyzes the phosphorylation of D-glycero-D-manno-heptose 7-phosphate at the C-1 position to selectively form D-glycero-beta-D-manno-heptose-1,7-bisphosphate. In terms of biological role, catalyzes the ADP transfer from ATP to D-glycero-beta-D-manno-heptose 1-phosphate, yielding ADP-D-glycero-beta-D-manno-heptose. The chain is Bifunctional protein HldE from Shewanella sediminis (strain HAW-EB3).